Here is a 380-residue protein sequence, read N- to C-terminus: Chaperone protein DnaJ (380 aa).

The 65-residue stretch at D5 to G69 folds into the J domain. The segment at G135–R217 adopts a CR-type zinc-finger fold. Residues C148, C151, C165, C168, C191, C194, C205, and C208 each contribute to the Zn(2+) site. CXXCXGXG motif repeat units lie at residues C148 to G155, C165 to G172, C191 to G198, and C205 to G212.

It belongs to the DnaJ family. Homodimer. Zn(2+) is required as a cofactor.

It is found in the cytoplasm. Functionally, participates actively in the response to hyperosmotic and heat shock by preventing the aggregation of stress-denatured proteins and by disaggregating proteins, also in an autonomous, DnaK-independent fashion. Unfolded proteins bind initially to DnaJ; upon interaction with the DnaJ-bound protein, DnaK hydrolyzes its bound ATP, resulting in the formation of a stable complex. GrpE releases ADP from DnaK; ATP binding to DnaK triggers the release of the substrate protein, thus completing the reaction cycle. Several rounds of ATP-dependent interactions between DnaJ, DnaK and GrpE are required for fully efficient folding. Also involved, together with DnaK and GrpE, in the DNA replication of plasmids through activation of initiation proteins. This Geobacillus sp. (strain WCH70) protein is Chaperone protein DnaJ.